We begin with the raw amino-acid sequence, 473 residues long: Sulfate adenylyltransferase subunit 1 (473 aa).

The tr-type G domain maps to 19–238 (KTLLKFLTCG…IKIKNSISSE (220 aa)). The segment at 28 to 35 (GSVDDGKS) is G1. 28–35 (GSVDDGKS) provides a ligand contact to GTP. The tract at residues 86 to 90 (GITID) is G2. The tract at residues 107–110 (DTPG) is G3. GTP-binding positions include 107 to 111 (DTPGH) and 162 to 165 (NKMD). Residues 162 to 165 (NKMD) are G4. The interval 200 to 202 (SAL) is G5.

This sequence belongs to the TRAFAC class translation factor GTPase superfamily. Classic translation factor GTPase family. CysN/NodQ subfamily. As to quaternary structure, heterodimer composed of CysD, the smaller subunit, and CysN.

The enzyme catalyses sulfate + ATP + H(+) = adenosine 5'-phosphosulfate + diphosphate. The protein operates within sulfur metabolism; hydrogen sulfide biosynthesis; sulfite from sulfate: step 1/3. With CysD forms the ATP sulfurylase (ATPS) that catalyzes the adenylation of sulfate producing adenosine 5'-phosphosulfate (APS) and diphosphate, the first enzymatic step in sulfur assimilation pathway. APS synthesis involves the formation of a high-energy phosphoric-sulfuric acid anhydride bond driven by GTP hydrolysis by CysN coupled to ATP hydrolysis by CysD. The polypeptide is Sulfate adenylyltransferase subunit 1 (Buchnera aphidicola subsp. Acyrthosiphon pisum (strain APS) (Acyrthosiphon pisum symbiotic bacterium)).